The following is a 38-amino-acid chain: Photosystem II reaction center protein Y (38 aa).

The helical transmembrane segment at 5 to 23 threads the bilayer; that stretch reads VVVVLAPVIIAGSWAIFNI.

Belongs to the PsbY family. PSII is composed of 1 copy each of membrane proteins PsbA, PsbB, PsbC, PsbD, PsbE, PsbF, PsbH, PsbI, PsbJ, PsbK, PsbL, PsbM, PsbT, PsbX, PsbY, PsbZ, Psb30/Ycf12, peripheral proteins PsbO, CyanoQ (PsbQ), PsbU, PsbV and a large number of cofactors. It forms dimeric complexes.

The protein localises to the cellular thylakoid membrane. Its function is as follows. Loosely associated component of the core of photosystem II (PSII), it is not always seen in crystals. PSII is a light-driven water plastoquinone oxidoreductase, using light energy to abstract electrons from H(2)O, generating a proton gradient subsequently used for ATP formation. The protein is Photosystem II reaction center protein Y of Picosynechococcus sp. (strain ATCC 27264 / PCC 7002 / PR-6) (Agmenellum quadruplicatum).